The chain runs to 71 residues: MDKELLAMLVCPRCQGKLKYDRERAELKCHFDGLAFPIEDEIPVMLEEQARHMDADEKLGKAPGEARDATS.

The protein belongs to the UPF0434 family.

The chain is UPF0434 protein Csal_1588 from Chromohalobacter salexigens (strain ATCC BAA-138 / DSM 3043 / CIP 106854 / NCIMB 13768 / 1H11).